The sequence spans 630 residues: 1-deoxy-D-xylulose-5-phosphate synthase (630 aa).

Thiamine diphosphate is bound by residues histidine 72 and 113-115 (GHS). Aspartate 144 is a binding site for Mg(2+). Thiamine diphosphate is bound by residues 145–146 (GA), asparagine 173, tyrosine 284, and glutamate 367. Asparagine 173 serves as a coordination point for Mg(2+).

This sequence belongs to the transketolase family. DXPS subfamily. As to quaternary structure, homodimer. Mg(2+) is required as a cofactor. Requires thiamine diphosphate as cofactor.

The catalysed reaction is D-glyceraldehyde 3-phosphate + pyruvate + H(+) = 1-deoxy-D-xylulose 5-phosphate + CO2. The protein operates within metabolic intermediate biosynthesis; 1-deoxy-D-xylulose 5-phosphate biosynthesis; 1-deoxy-D-xylulose 5-phosphate from D-glyceraldehyde 3-phosphate and pyruvate: step 1/1. Functionally, catalyzes the acyloin condensation reaction between C atoms 2 and 3 of pyruvate and glyceraldehyde 3-phosphate to yield 1-deoxy-D-xylulose-5-phosphate (DXP). The protein is 1-deoxy-D-xylulose-5-phosphate synthase of Bacillus cytotoxicus (strain DSM 22905 / CIP 110041 / 391-98 / NVH 391-98).